A 417-amino-acid polypeptide reads, in one-letter code: RH-like protein IIR (417 aa).

11 helical membrane passes run 12–32 (CLPL…YFFT), 44–64 (LVAS…GFGF), 77–97 (VAFS…LDGF), 125–145 (ISVD…MVLV), 172–192 (IYVF…KPLP), 203–223 (TIPS…WPSF), 238–258 (VFNT…GSSL), 265–285 (ISMS…GTSC), 287–307 (LIPS…ISVG), 331–351 (NFSW…VRHT), and 358–378 (MIGF…TIAL).

It belongs to the ammonium transporter (TC 2.A.49) family. Rh subfamily.

The protein resides in the membrane. In terms of biological role, may be part of an oligomeric complex which is likely to have a transport or channel function in the erythrocyte membrane. This is RH-like protein IIR from Pan troglodytes (Chimpanzee).